The sequence spans 316 residues: Adenine deaminase (316 aa).

Residues His-14, His-16, and His-194 each coordinate Zn(2+). Glu-197 acts as the Proton donor in catalysis. Position 275 (Asp-275) interacts with Zn(2+). Residue Asp-276 participates in substrate binding.

It belongs to the metallo-dependent hydrolases superfamily. Adenosine and AMP deaminases family. Adenine deaminase type 2 subfamily. The cofactor is Zn(2+).

The enzyme catalyses adenine + H2O + H(+) = hypoxanthine + NH4(+). Catalyzes the hydrolytic deamination of adenine to hypoxanthine. Plays an important role in the purine salvage pathway and in nitrogen catabolism. The protein is Adenine deaminase of Pseudomonas aeruginosa (strain LESB58).